Here is a 594-residue protein sequence, read N- to C-terminus: DELLA protein 1 (594 aa).

The disordered stretch occupies residues 1-36; it reads MKREHQESFGGGVISNNNKTNTNHLNSSKNINFGEC. The span at 15 to 30 shows a compositional bias: low complexity; the sequence is SNNNKTNTNHLNSSKN. Positions 61–65 match the DELLA motif motif; it reads DELLA. Residues 207-587 enclose the GRAS domain; sequence VDTQETGVRL…RSLIATSAWK (381 aa). A leucine repeat I (LRI) region spans residues 214-268; that stretch reads VRLVHTLMACAEAIQQKNLKLAEALVKHISLLASLQTGAMRKVASYFAQALARRI. The segment at 216 to 253 is required for possible homodimerization; sequence LVHTLMACAEAIQQKNLKLAEALVKHISLLASLQTGAM. The short motif at 221–225 is the LxCxE motif; degenerate element; it reads MACAE. Residues 285 to 350 form a VHIID region; sequence HMHFYESSPY…GGPPTFRLTG (66 aa). The short motif at 316–320 is the VHIID element; sequence VHVID. The leucine repeat II (LRII) stretch occupies residues 364 to 396; it reads QVGWKLAQLAQTIGVQFEFRGFVCNSIADLDPN. Positions 406–508 are PFYRE; that stretch reads VAVNSVFELH…EIYLGKQICN (103 aa). An LXXLL motif; degenerate motif is present at residues 414 to 418; that stretch reads LHTML. Positions 511–587 are SAW; that stretch reads AYEGVDRVER…RSLIATSAWK (77 aa).

This sequence belongs to the GRAS family. DELLA subfamily. May be a homodimer. Ubiquitinated. Upon GA application it is ubiquitinated, leading to its subsequent degradation. In terms of tissue distribution, strongly expressed in the vascular tissue and endodermis but barely in the inner cortical cells where arbuscule are formed during arbuscular mycorrhizal (AM) symbiosis.

The protein localises to the nucleus. Functionally, probable transcriptional regulator that acts as a repressor of the gibberellin (GA) signaling pathway. Probably acts by participating in large multiprotein complexes that repress transcription of GA-inducible genes. Upon GA application, it is degraded by the proteasome, allowing the GA signaling pathway. Together with DELLA2, required to enable arbuscule development during arbuscular mycorrhizal (AM) symbiosis with AM fungi (e.g. Glomus versiforme) via the regulation of RAM1 which, in turn, regulates various AM genes (e.g. NSP1, NSP2, PT4, LEC5, RAM2, EXO70I, STR and RAD1). In Medicago truncatula (Barrel medic), this protein is DELLA protein 1.